A 76-amino-acid polypeptide reads, in one-letter code: DNA-directed RNA polymerase subunit omega (76 aa).

The protein belongs to the RNA polymerase subunit omega family. The RNAP catalytic core consists of 2 alpha, 1 beta, 1 beta' and 1 omega subunit. When a sigma factor is associated with the core the holoenzyme is formed, which can initiate transcription.

It catalyses the reaction RNA(n) + a ribonucleoside 5'-triphosphate = RNA(n+1) + diphosphate. Promotes RNA polymerase assembly. Latches the N- and C-terminal regions of the beta' subunit thereby facilitating its interaction with the beta and alpha subunits. The protein is DNA-directed RNA polymerase subunit omega (rpoZ) of Aquifex aeolicus (strain VF5).